The sequence spans 145 residues: Superoxide dismutase [Mn/Fe] (145 aa).

Fe(3+) is bound by residues H10 and H64. Mn(2+) is bound by residues H10 and H64.

It belongs to the iron/manganese superoxide dismutase family. Mn(2+) serves as cofactor. Fe(3+) is required as a cofactor.

It catalyses the reaction 2 superoxide + 2 H(+) = H2O2 + O2. Destroys superoxide anion radicals which are normally produced within the cells and which are toxic to biological systems. Catalyzes the dismutation of superoxide anion radicals into O2 and H2O2 by successive reduction and oxidation of the transition metal ion at the active site. The chain is Superoxide dismutase [Mn/Fe] (sodA) from Streptococcus iniae (Streptococcus shiloi).